An 83-amino-acid chain; its full sequence is Large ribosomal subunit protein bL27 (83 aa).

Belongs to the bacterial ribosomal protein bL27 family.

The sequence is that of Large ribosomal subunit protein bL27 from Treponema denticola (strain ATCC 35405 / DSM 14222 / CIP 103919 / JCM 8153 / KCTC 15104).